The chain runs to 81 residues: Acyl carrier protein (81 aa).

A Carrier domain is found at 4–79; sequence AEIKDKVYDI…QAIDYIVNKK (76 aa). O-(pantetheine 4'-phosphoryl)serine is present on Ser-39.

Belongs to the acyl carrier protein (ACP) family. In terms of processing, 4'-phosphopantetheine is transferred from CoA to a specific serine of apo-ACP by AcpS. This modification is essential for activity because fatty acids are bound in thioester linkage to the sulfhydryl of the prosthetic group.

It is found in the cytoplasm. The protein operates within lipid metabolism; fatty acid biosynthesis. Functionally, carrier of the growing fatty acid chain in fatty acid biosynthesis. The protein is Acyl carrier protein of Chlorobaculum tepidum (strain ATCC 49652 / DSM 12025 / NBRC 103806 / TLS) (Chlorobium tepidum).